A 275-amino-acid polypeptide reads, in one-letter code: 2,3,4,5-tetrahydropyridine-2,6-dicarboxylate N-succinyltransferase (275 aa).

2 residues coordinate substrate: arginine 104 and aspartate 141.

This sequence belongs to the transferase hexapeptide repeat family. In terms of assembly, homotrimer.

The protein resides in the cytoplasm. The catalysed reaction is (S)-2,3,4,5-tetrahydrodipicolinate + succinyl-CoA + H2O = (S)-2-succinylamino-6-oxoheptanedioate + CoA. Its pathway is amino-acid biosynthesis; L-lysine biosynthesis via DAP pathway; LL-2,6-diaminopimelate from (S)-tetrahydrodipicolinate (succinylase route): step 1/3. This chain is 2,3,4,5-tetrahydropyridine-2,6-dicarboxylate N-succinyltransferase, found in Aeromonas salmonicida (strain A449).